Here is a 156-residue protein sequence, read N- to C-terminus: ATP synthase subunit b (156 aa).

Residues 1–21 traverse the membrane as a helical segment; that stretch reads MNVTVTLIGQMVAFGILVWFV.

This sequence belongs to the ATPase B chain family. As to quaternary structure, F-type ATPases have 2 components, F(1) - the catalytic core - and F(0) - the membrane proton channel. F(1) has five subunits: alpha(3), beta(3), gamma(1), delta(1), epsilon(1). F(0) has three main subunits: a(1), b(2) and c(10-14). The alpha and beta chains form an alternating ring which encloses part of the gamma chain. F(1) is attached to F(0) by a central stalk formed by the gamma and epsilon chains, while a peripheral stalk is formed by the delta and b chains.

The protein localises to the cell inner membrane. Functionally, f(1)F(0) ATP synthase produces ATP from ADP in the presence of a proton or sodium gradient. F-type ATPases consist of two structural domains, F(1) containing the extramembraneous catalytic core and F(0) containing the membrane proton channel, linked together by a central stalk and a peripheral stalk. During catalysis, ATP synthesis in the catalytic domain of F(1) is coupled via a rotary mechanism of the central stalk subunits to proton translocation. In terms of biological role, component of the F(0) channel, it forms part of the peripheral stalk, linking F(1) to F(0). This is ATP synthase subunit b from Nitrosococcus oceani (strain ATCC 19707 / BCRC 17464 / JCM 30415 / NCIMB 11848 / C-107).